A 371-amino-acid polypeptide reads, in one-letter code: Neuropeptide S receptor (371 aa).

Residues methionine 1–glutamine 52 are Extracellular-facing. N-linked (GlcNAc...) asparagine glycosylation is found at asparagine 4 and asparagine 13. A helical membrane pass occupies residues leucine 53–serine 73. Topologically, residues threonine 74 to arginine 82 are cytoplasmic. The helical transmembrane segment at methionine 83–leucine 103 threads the bilayer. The Extracellular portion of the chain corresponds to threonine 104–valine 123. Cysteine 121 and cysteine 197 are joined by a disulfide. The helical transmembrane segment at valine 124–isoleucine 144 threads the bilayer. At aspartate 145–lysine 164 the chain is on the cytoplasmic side. A helical transmembrane segment spans residues valine 165 to phenylalanine 185. Over glycine 186 to threonine 212 the chain is Extracellular. A helical membrane pass occupies residues isoleucine 213 to valine 233. Over isoleucine 234 to tyrosine 275 the chain is Cytoplasmic. The chain crosses the membrane as a helical span at residues serine 276–leucine 296. At aspartate 297–serine 312 the chain is on the extracellular side. A helical transmembrane segment spans residues valine 313–phenylalanine 333. Over serine 334–isoleucine 371 the chain is Cytoplasmic.

It belongs to the G-protein coupled receptor 1 family. Vasopressin/oxytocin receptor subfamily.

Its subcellular location is the cell membrane. G-protein coupled receptor for neuropeptide S (NPS). Promotes mobilization of intracellular Ca(2+) stores. Inhibits cell growth in response to NPS binding. Involved in pathogenesis of asthma and other IgE-mediated diseases. This Macaca mulatta (Rhesus macaque) protein is Neuropeptide S receptor (NPSR1).